A 209-amino-acid polypeptide reads, in one-letter code: Protocatechuate 3,4-dioxygenase alpha chain (209 aa).

Arginine 142 is a 3,4-dihydroxybenzoate binding site.

It belongs to the intradiol ring-cleavage dioxygenase family. In terms of assembly, the enzyme is an oligomer of 12 copies of the alpha and beta chains. Fe(3+) is required as a cofactor.

It catalyses the reaction 3,4-dihydroxybenzoate + O2 = 3-carboxy-cis,cis-muconate + 2 H(+). It functions in the pathway aromatic compound metabolism; beta-ketoadipate pathway; 3-carboxy-cis,cis-muconate from 3,4-dihydroxybenzoate: step 1/1. In terms of biological role, plays an essential role in the utilization of numerous aromatic and hydroaromatic compounds via the beta-ketoadipate pathway. The protein is Protocatechuate 3,4-dioxygenase alpha chain (pcaG) of Acinetobacter baylyi (strain ATCC 33305 / BD413 / ADP1).